The following is a 152-amino-acid chain: Transcriptional repressor NrdR (152 aa).

A zinc finger lies at 3 to 34; sequence CPFCHNEQSRVIDSRVIDSGTSIRRRRECAAC. Residues 46-136 form the ATP-cone domain; that stretch reads LSVVKRNGLA…VYKSFESADD (91 aa).

This sequence belongs to the NrdR family. Zn(2+) is required as a cofactor.

Functionally, negatively regulates transcription of bacterial ribonucleotide reductase nrd genes and operons by binding to NrdR-boxes. The polypeptide is Transcriptional repressor NrdR (Corynebacterium aurimucosum (strain ATCC 700975 / DSM 44827 / CIP 107346 / CN-1) (Corynebacterium nigricans)).